A 192-amino-acid polypeptide reads, in one-letter code: Signal peptidase complex catalytic subunit SEC11C (192 aa).

The Cytoplasmic segment spans residues 1 to 28 (MVRAGAVGAHLPASGLDIFGDLKKMNKR). The helical; Signal-anchor for type II membrane protein transmembrane segment at 29–48 (QLYYQVLNFAMIVSSALMIW) threads the bilayer. The Lumenal segment spans residues 49 to 192 (KGLIVLTGSE…GAYVLLKRES (144 aa)). Residues Ser68, His108, and Asp134 each act as charge relay system in the active site. The C-terminal short (CTS) helix stretch occupies residues 177–188 (ALLAVMGAYVLL).

Belongs to the peptidase S26B family. In terms of assembly, component of the signal peptidase complex paralog C (SPC-C) composed of a catalytic subunit SEC11C and three accessory subunits SPCS1, SPCS2 and SPCS3. Within the complex, interacts with SPCS2 and SPCS3. The complex induces a local thinning of the ER membrane which is used to measure the length of the signal peptide (SP) h-region of protein substrates. This ensures the selectivity of the complex towards h-regions shorter than 18-20 amino acids. In terms of processing, may undergo processing at the N-terminus.

Its subcellular location is the endoplasmic reticulum membrane. It catalyses the reaction Cleavage of hydrophobic, N-terminal signal or leader sequences from secreted and periplasmic proteins.. Functionally, catalytic component of the signal peptidase complex (SPC) which catalyzes the cleavage of N-terminal signal sequences from nascent proteins as they are translocated into the lumen of the endoplasmic reticulum. Specifically cleaves N-terminal signal peptides that contain a hydrophobic alpha-helix (h-region) shorter than 18-20 amino acids. The protein is Signal peptidase complex catalytic subunit SEC11C (SEC11C) of Homo sapiens (Human).